A 41-amino-acid polypeptide reads, in one-letter code: Entericidin A (41 aa).

Positions 1-18 (MMKRLIVLVLLASTLLTG) are cleaved as a signal peptide. Cys19 is lipidated: N-palmitoyl cysteine. Cys19 carries the S-diacylglycerol cysteine lipid modification.

Belongs to the EcnA/EcnB lipoprotein family.

Its subcellular location is the cell membrane. Acts as antidote to the effect of entericidin B. This chain is Entericidin A (ecnA), found in Escherichia coli O157:H7.